The primary structure comprises 242 residues: Small ribosomal subunit protein uS2 (242 aa).

It belongs to the universal ribosomal protein uS2 family.

The polypeptide is Small ribosomal subunit protein uS2 (Neisseria meningitidis serogroup B (strain ATCC BAA-335 / MC58)).